Consider the following 400-residue polypeptide: MADSDSSSEMPAHSPSPSPIPCAKQKPPNTGITISLLEIGSLPTFCCSSFSEPNNNMCPIRKQGKVQKFSNLLKDVKDVLKNIAGFEEKTTDGDPFDDTYIPEDLSELNIRGFDKRNKLRFKDDLFIHFDPERENTMRQEMLFKSHSAKNMVQKFARDLCNSEEKRGCDGVQLNAKRRRTGSVHIRGEYRKLRNNMEQLLQEADHWSKQHNELSELMRSYQECHKEIKDIVDCSRVCSQTQNNNEVPSKQKLEEQVKKLSQDTHSLHLIAALLENECQILQQRVDILRELHLHEAGPGHEKPLQTSGEQDKKCGEQDKKCGEQDKKCGEQDKKCPKLAEAEKMDGSKHTMKTTEGTITRKPKIFRCPNDCLTKKARNNRFNARVAKKSLVGKRRTISSFR.

Residues 1–27 (MADSDSSSEMPAHSPSPSPIPCAKQKP) form a disordered region. Phosphoserine is present on Ser-106. The tract at residues 116–127 (RNKLRFKDDLFI) is helix-loop-helix motif. The segment at 128-193 (HFDPERENTM…HIRGEYRKLR (66 aa)) is basic motif. Coiled-coil stretches lie at residues 182–231 (SVHI…KDIV) and 268–293 (LIAA…LHLH). At Ser-207 the chain carries Phosphoserine. Residues 252–273 (LEEQVKKLSQDTHSLHLIAALL) form a leucine-zipper region. The segment at 295–332 (AGPGHEKPLQTSGEQDKKCGEQDKKCGEQDKKCGEQDK) is disordered.

Interacts with PPP1CC isoform gamma-2. In terms of processing, phosphorylated by MAPK1/ERK2 and MAPK3/ERK1.

It localises to the cytoplasm. Its subcellular location is the nucleus. Transcription factor that binds to the DNA sequence 5'-CANNTG-3'(E box) and the G-box motif. May play an important role in the regulation of cell proliferation and differentiation during spermatogenesis. In Rattus norvegicus (Rat), this protein is Spermatogenic leucine zipper protein 1 (Spz1).